Consider the following 434-residue polypeptide: MEHLTLGPLTRANGTVRLPGSKSISNRVLLLAALATGETRVRDLLDSDDTRVMLQALRTLGVAWRQEGDDYIVTGAGGNFPNKSAELFMGNAGTAIRPLTAALALQGGNYKLSGVPRMHERPIGDLVDGLRQVGAVIDYLGNEGFPPLHIQPAGIRIDAPIRVRGDVSSQFLTALLMSLPMAQSDSGRIEIEVVGELISKPYIEITLNLLARFGIEIERQGWERFVLPAGAAYRSPGEIFVEGDASSASYFLAAGAIGGGPVRVEGVGMASIQGDVRFAEALNRMGANVMAGDNWIEVRGTERDDGRLHGIELDCNHIPDAAMTLAVAALFAEGTTTLTNIASWRVKETDRIAAMATELRKLGAVVEEGADYLRVTPPQPWQTPADGIGTYDDHRMAMCFSLAAFGPLPVRINDPGCVAKTFPDYFSVFAGVTG.

Residues Lys22, Ser23, and Arg27 each coordinate 3-phosphoshikimate. Residue Lys22 coordinates phosphoenolpyruvate. Residues Gly93 and Arg121 each contribute to the phosphoenolpyruvate site. Residues Ser168, Ser169, Gln170, Ser199, Asp320, and Lys347 each contribute to the 3-phosphoshikimate site. Position 170 (Gln170) interacts with phosphoenolpyruvate. Residue Asp320 is the Proton acceptor of the active site. Residues Arg351, Arg395, and Lys420 each contribute to the phosphoenolpyruvate site.

It belongs to the EPSP synthase family. In terms of assembly, monomer.

It localises to the cytoplasm. It carries out the reaction 3-phosphoshikimate + phosphoenolpyruvate = 5-O-(1-carboxyvinyl)-3-phosphoshikimate + phosphate. The protein operates within metabolic intermediate biosynthesis; chorismate biosynthesis; chorismate from D-erythrose 4-phosphate and phosphoenolpyruvate: step 6/7. In terms of biological role, catalyzes the transfer of the enolpyruvyl moiety of phosphoenolpyruvate (PEP) to the 5-hydroxyl of shikimate-3-phosphate (S3P) to produce enolpyruvyl shikimate-3-phosphate and inorganic phosphate. The sequence is that of 3-phosphoshikimate 1-carboxyvinyltransferase from Cupriavidus necator (strain ATCC 17699 / DSM 428 / KCTC 22496 / NCIMB 10442 / H16 / Stanier 337) (Ralstonia eutropha).